The primary structure comprises 516 residues: D-aminopeptidase (516 aa).

Serine 61 functions as the Nucleophile in the catalytic mechanism. The Proton donor/acceptor role is filled by lysine 64. Positions 476–486 (RRSMDAPAPGD) are important for specificity. Aspartate 480 provides a ligand contact to substrate.

Belongs to the peptidase S12 family. Homodimer.

The catalysed reaction is Release of an N-terminal D-amino acid from a peptide, Xaa-|-Yaa-, in which Xaa is preferably D-Ala, D-Ser or D-Thr. D-amino acid amides and methyl esters also are hydrolyzed, as is glycine amide.. With respect to regulation, inhibited by beta-lactam compounds such as 6-aminopenicillic acid, 7-aminocephalosporanic acid, benzylpenicillin and ampicillin. Inhibited by p-chloromercuribenzoate. In terms of biological role, hydrolyzes N-terminal residues in D-amino acid-containing peptides. The chain is D-aminopeptidase from Cereibacter sphaeroides (strain ATCC 17023 / DSM 158 / JCM 6121 / CCUG 31486 / LMG 2827 / NBRC 12203 / NCIMB 8253 / ATH 2.4.1.) (Rhodobacter sphaeroides).